The chain runs to 276 residues: NADPH-dependent 7-cyano-7-deazaguanine reductase (276 aa).

83–85 lines the substrate pocket; the sequence is IES. 85 to 86 is an NADPH binding site; that stretch reads SK. The active-site Thioimide intermediate is the C184. D191 functions as the Proton donor in the catalytic mechanism. Position 223 to 224 (223 to 224) interacts with substrate; the sequence is HE. Residue 252–253 participates in NADPH binding; that stretch reads RG.

It belongs to the GTP cyclohydrolase I family. QueF type 2 subfamily. As to quaternary structure, homodimer.

Its subcellular location is the cytoplasm. It carries out the reaction 7-aminomethyl-7-carbaguanine + 2 NADP(+) = 7-cyano-7-deazaguanine + 2 NADPH + 3 H(+). It participates in tRNA modification; tRNA-queuosine biosynthesis. Catalyzes the NADPH-dependent reduction of 7-cyano-7-deazaguanine (preQ0) to 7-aminomethyl-7-deazaguanine (preQ1). This Pseudomonas paraeruginosa (strain DSM 24068 / PA7) (Pseudomonas aeruginosa (strain PA7)) protein is NADPH-dependent 7-cyano-7-deazaguanine reductase.